Reading from the N-terminus, the 401-residue chain is S-adenosylmethionine synthase (401 aa).

136–141 (GTGSSD) provides a ligand contact to ATP. The segment at 278-305 (GDDGSVGRGNRSNGLITPSRPMSMEATS) is disordered.

It belongs to the AdoMet synthase 2 family. The cofactor is Mg(2+).

The catalysed reaction is L-methionine + ATP + H2O = S-adenosyl-L-methionine + phosphate + diphosphate. Its pathway is amino-acid biosynthesis; S-adenosyl-L-methionine biosynthesis; S-adenosyl-L-methionine from L-methionine: step 1/1. Catalyzes the formation of S-adenosylmethionine from methionine and ATP. The polypeptide is S-adenosylmethionine synthase (Methanococcoides burtonii (strain DSM 6242 / NBRC 107633 / OCM 468 / ACE-M)).